Here is a 134-residue protein sequence, read N- to C-terminus: Cytochrome b5 isoform E (134 aa).

The Cytochrome b5 heme-binding domain occupies 5-81 (RKVLSFEEVS…MDKYFIGEID (77 aa)). Heme is bound by residues His-40 and His-64. Residues 107 to 127 (FIIKILQFLVPILILGLALVV) form a helical membrane-spanning segment. Residues 128-134 (RHYTKKD) carry the AKR2A-binding sequence (ABS) required for endoplasmic reticulum membrane targeting motif.

The protein belongs to the cytochrome b5 family. Interacts with CER1, BI-1, FAH1 and FAH2. Interacts with AKR2A. As to expression, expressed in roots, stems, leaves, flowers and siliques.

The protein localises to the cell membrane. The protein resides in the endoplasmic reticulum membrane. Membrane bound hemoprotein which function as an electron carrier for several membrane bound oxygenases, including fatty acid desaturases. The polypeptide is Cytochrome b5 isoform E (CYTB5-E) (Arabidopsis thaliana (Mouse-ear cress)).